The following is a 232-amino-acid chain: 5'-methylthioadenosine/S-adenosylhomocysteine nucleosidase (232 aa).

Glu12 acts as the Proton acceptor in catalysis. Substrate is bound by residues Gly78, Ile152, and 173-174 (ME). The active-site Proton donor is Asp197.

It belongs to the PNP/UDP phosphorylase family. MtnN subfamily. As to quaternary structure, homodimer.

The catalysed reaction is S-adenosyl-L-homocysteine + H2O = S-(5-deoxy-D-ribos-5-yl)-L-homocysteine + adenine. It carries out the reaction S-methyl-5'-thioadenosine + H2O = 5-(methylsulfanyl)-D-ribose + adenine. The enzyme catalyses 5'-deoxyadenosine + H2O = 5-deoxy-D-ribose + adenine. The protein operates within amino-acid biosynthesis; L-methionine biosynthesis via salvage pathway; S-methyl-5-thio-alpha-D-ribose 1-phosphate from S-methyl-5'-thioadenosine (hydrolase route): step 1/2. Its function is as follows. Catalyzes the irreversible cleavage of the glycosidic bond in both 5'-methylthioadenosine (MTA) and S-adenosylhomocysteine (SAH/AdoHcy) to adenine and the corresponding thioribose, 5'-methylthioribose and S-ribosylhomocysteine, respectively. Also cleaves 5'-deoxyadenosine, a toxic by-product of radical S-adenosylmethionine (SAM) enzymes, into 5-deoxyribose and adenine. Thus, is required for in vivo function of the radical SAM enzymes biotin synthase and lipoic acid synthase, that are inhibited by 5'-deoxyadenosine accumulation. The chain is 5'-methylthioadenosine/S-adenosylhomocysteine nucleosidase from Escherichia fergusonii (strain ATCC 35469 / DSM 13698 / CCUG 18766 / IAM 14443 / JCM 21226 / LMG 7866 / NBRC 102419 / NCTC 12128 / CDC 0568-73).